The sequence spans 642 residues: Chaperone protein DnaK (642 aa).

Threonine 198 carries the post-translational modification Phosphothreonine; by autocatalysis. Over residues 578–589 (DDKEAIESRMQK) the composition is skewed to basic and acidic residues. The disordered stretch occupies residues 578–642 (DDKEAIESRM…FEEVKDGDKK (65 aa)). Residues 603-619 (AEQAAQQGGDAGAQAED) show a composition bias toward low complexity.

The protein belongs to the heat shock protein 70 family.

Functionally, acts as a chaperone. The sequence is that of Chaperone protein DnaK from Hahella chejuensis (strain KCTC 2396).